The sequence spans 62 residues: Conotoxin Qc5.2 (62 aa).

Positions 1-22 (MRCVPVFIILLLLSPSAPSVDA) are cleaved as a signal peptide. The propeptide occupies 23 to 48 (HPMTKDDVPQASLHDDAKRTLQVPWM). The residue at position 60 (V60) is a Valine amide.

The protein belongs to the conotoxin T superfamily. In terms of processing, contains 2 disulfide bonds that can be either 'C1-C3, C2-C4' or 'C1-C4, C2-C3', since these disulfide connectivities have been observed for conotoxins with cysteine framework V (for examples, see AC P0DQQ7 and AC P81755). In terms of tissue distribution, expressed by the venom duct.

It is found in the secreted. This is Conotoxin Qc5.2 from Conus quercinus (Oak cone).